The following is a 942-amino-acid chain: UvrABC system protein A (942 aa).

Residue 32–39 (GLSGSGKS) coordinates ATP. Residues 251–278 (CPVCGFTVPELEPRLFSFNAPFGSCPTC) form a C4-type zinc finger. ABC transporter domains lie at 308 to 589 (WNPI…KKSI) and 609 to 937 (GNGR…HYLK). 641 to 648 (GVSGSGKS) contacts ATP. The C4-type zinc finger occupies 740–766 (CEACSGDGIIKIEMHFLPDVYVPCEVC).

The protein belongs to the ABC transporter superfamily. UvrA family. Forms a heterotetramer with UvrB during the search for lesions.

It localises to the cytoplasm. Its function is as follows. The UvrABC repair system catalyzes the recognition and processing of DNA lesions. UvrA is an ATPase and a DNA-binding protein. A damage recognition complex composed of 2 UvrA and 2 UvrB subunits scans DNA for abnormalities. When the presence of a lesion has been verified by UvrB, the UvrA molecules dissociate. The polypeptide is UvrABC system protein A (Streptococcus pyogenes serotype M3 (strain ATCC BAA-595 / MGAS315)).